The primary structure comprises 91 residues: Cell division topological specificity factor (91 aa).

The protein belongs to the MinE family.

Functionally, prevents the cell division inhibition by proteins MinC and MinD at internal division sites while permitting inhibition at polar sites. This ensures cell division at the proper site by restricting the formation of a division septum at the midpoint of the long axis of the cell. In Thermoanaerobacter pseudethanolicus (strain ATCC 33223 / 39E) (Clostridium thermohydrosulfuricum), this protein is Cell division topological specificity factor.